A 93-amino-acid polypeptide reads, in one-letter code: uncharacterized protein (93 aa).

Residues 35–72 (KSVPPPTPPKPVKKTPSPTLPKPSKQKQEPQVEVNEDR) form a disordered region. Basic and acidic residues predominate over residues 60-72 (QKQEPQVEVNEDR).

This is an uncharacterized protein from Ostreid herpesvirus 1 (isolate France) (OsHV-1).